The primary structure comprises 504 residues: Galactan beta-1,4-galactosyltransferase GALS3 (504 aa).

Residues 30-50 (LTFMALLVLCTLATLLPFIPS) traverse the membrane as a helical segment. The 215-residue stretch at 242 to 456 (DYLYCGSSLY…YHGSISQRRE (215 aa)) folds into the GT92 domain.

This sequence belongs to the glycosyltransferase 92 family. In terms of tissue distribution, expressed in root caps, mature leaves, top of the stems and seeds.

The protein resides in the golgi apparatus membrane. Involved in the biosynthesis of beta-1,4-galactan. Beta-1,4-galactans are abundant polysaccharides in plant cell walls and are found as side-chain of rhamnogalacturonan I, which is a major component of pectin. The chain is Galactan beta-1,4-galactosyltransferase GALS3 from Arabidopsis thaliana (Mouse-ear cress).